Consider the following 616-residue polypeptide: Probable Xaa-Pro aminopeptidase P (616 aa).

Mn(2+) is bound by residues Asp413, Asp424, Glu522, and Glu536.

The protein belongs to the peptidase M24B family. The cofactor is Mn(2+).

The catalysed reaction is Release of any N-terminal amino acid, including proline, that is linked to proline, even from a dipeptide or tripeptide.. Functionally, catalyzes the removal of a penultimate prolyl residue from the N-termini of peptides. The protein is Probable Xaa-Pro aminopeptidase P (AMPP) of Paracoccidioides lutzii (strain ATCC MYA-826 / Pb01) (Paracoccidioides brasiliensis).